The primary structure comprises 177 residues: Peptide methionine sulfoxide reductase MsrA (177 aa).

The active site involves C10.

The protein belongs to the MsrA Met sulfoxide reductase family.

It carries out the reaction L-methionyl-[protein] + [thioredoxin]-disulfide + H2O = L-methionyl-(S)-S-oxide-[protein] + [thioredoxin]-dithiol. The enzyme catalyses [thioredoxin]-disulfide + L-methionine + H2O = L-methionine (S)-S-oxide + [thioredoxin]-dithiol. Has an important function as a repair enzyme for proteins that have been inactivated by oxidation. Catalyzes the reversible oxidation-reduction of methionine sulfoxide in proteins to methionine. This is Peptide methionine sulfoxide reductase MsrA from Saccharolobus solfataricus (strain ATCC 35092 / DSM 1617 / JCM 11322 / P2) (Sulfolobus solfataricus).